The following is a 285-amino-acid chain: V-set and transmembrane domain-containing protein 2B (285 aa).

An N-terminal signal peptide occupies residues 1 to 28 (MEQRNRLGALGYLLPLLLHSLLLFVADA). The region spanning 29–143 (TFTEVPKDVT…DDDTQEHKAQ (115 aa)) is the Ig-like V-type domain. Residues 29 to 263 (TFTEVPKDVT…HGSGTGPGYS (235 aa)) lie on the Extracellular side of the membrane. Cysteines 49 and 127 form a disulfide. The segment at 160 to 225 (AEAVSHIQSS…AAAAAASATH (66 aa)) is disordered. 2 stretches are compositionally biased toward low complexity: residues 176 to 189 (ASSA…GAAV) and 208 to 225 (PAGS…SATH). A helical transmembrane segment spans residues 264 to 284 (ADPLLSLLLLALHKFLHPLLG). A topological domain (cytoplasmic) is located at residue His285.

It is found in the membrane. The chain is V-set and transmembrane domain-containing protein 2B (Vstm2b) from Mus musculus (Mouse).